The sequence spans 133 residues: Large ribosomal subunit protein bL12 (133 aa).

The segment at 98–118 is disordered; the sequence is DMVESTPKPIKEGTGKEDAED.

The protein belongs to the bacterial ribosomal protein bL12 family. In terms of assembly, homodimer. Part of the ribosomal stalk of the 50S ribosomal subunit. Forms a multimeric L10(L12)X complex, where L10 forms an elongated spine to which 2 to 4 L12 dimers bind in a sequential fashion. Binds GTP-bound translation factors.

Functionally, forms part of the ribosomal stalk which helps the ribosome interact with GTP-bound translation factors. Is thus essential for accurate translation. In Crocosphaera subtropica (strain ATCC 51142 / BH68) (Cyanothece sp. (strain ATCC 51142)), this protein is Large ribosomal subunit protein bL12.